We begin with the raw amino-acid sequence, 209 residues long: Tektin bundle-interacting protein 1 (209 aa).

Microtubule inner protein component of sperm flagellar doublet microtubules.

Its subcellular location is the cytoplasm. The protein localises to the cytoskeleton. It localises to the cilium axoneme. The protein resides in the flagellum axoneme. In terms of biological role, microtubule inner protein (MIP) part of the dynein-decorated doublet microtubules (DMTs) in cilia axoneme, which is required for motile cilia beating. Located at the center of the tektin bundle where may function to recruit tektins or stabilize the bundle. This Homo sapiens (Human) protein is Tektin bundle-interacting protein 1.